Here is a 466-residue protein sequence, read N- to C-terminus: Phosphomethylpyrimidine synthase (466 aa).

Residues Asn-80, Met-109, Tyr-139, His-175, 195-197 (SRG), 236-239 (DSLR), and Glu-275 contribute to the substrate site. Residue His-279 coordinates Zn(2+). Tyr-302 provides a ligand contact to substrate. His-343 is a binding site for Zn(2+). [4Fe-4S] cluster is bound by residues Cys-423, Cys-426, and Cys-431.

This sequence belongs to the ThiC family. It depends on [4Fe-4S] cluster as a cofactor.

The catalysed reaction is 5-amino-1-(5-phospho-beta-D-ribosyl)imidazole + S-adenosyl-L-methionine = 4-amino-2-methyl-5-(phosphooxymethyl)pyrimidine + CO + 5'-deoxyadenosine + formate + L-methionine + 3 H(+). It functions in the pathway cofactor biosynthesis; thiamine diphosphate biosynthesis. Catalyzes the synthesis of the hydroxymethylpyrimidine phosphate (HMP-P) moiety of thiamine from aminoimidazole ribotide (AIR) in a radical S-adenosyl-L-methionine (SAM)-dependent reaction. In Prochlorococcus marinus (strain NATL1A), this protein is Phosphomethylpyrimidine synthase.